The chain runs to 488 residues: 3-octaprenyl-4-hydroxybenzoate carboxy-lyase (488 aa).

Asparagine 172 provides a ligand contact to Mn(2+). Residues 175–177 (IYR), 189–191 (RWL), and 194–195 (RG) each bind prenylated FMN. Glutamate 238 is a binding site for Mn(2+). Catalysis depends on aspartate 287, which acts as the Proton donor.

Belongs to the UbiD family. As to quaternary structure, homohexamer. Prenylated FMN is required as a cofactor. It depends on Mn(2+) as a cofactor.

The protein resides in the cell membrane. It carries out the reaction a 4-hydroxy-3-(all-trans-polyprenyl)benzoate + H(+) = a 2-(all-trans-polyprenyl)phenol + CO2. It participates in cofactor biosynthesis; ubiquinone biosynthesis. Functionally, catalyzes the decarboxylation of 3-octaprenyl-4-hydroxy benzoate to 2-octaprenylphenol, an intermediate step in ubiquinone biosynthesis. This Alkalilimnicola ehrlichii (strain ATCC BAA-1101 / DSM 17681 / MLHE-1) protein is 3-octaprenyl-4-hydroxybenzoate carboxy-lyase.